A 382-amino-acid chain; its full sequence is Neuropeptide Y receptor type 1 (382 aa).

The Extracellular portion of the chain corresponds to Met-1–His-33. Residues Asn-2, Asn-11, and Asn-17 are each glycosylated (N-linked (GlcNAc...) asparagine). A helical transmembrane segment spans residues Leu-34–Val-54. The Cytoplasmic segment spans residues Thr-55 to Asn-75. Residues Ile-76–Thr-96 traverse the membrane as a helical segment. Residues Phe-97–Asn-115 lie on the Extracellular side of the membrane. The cysteines at positions 112 and 197 are disulfide-linked. Residues Pro-116–Glu-136 traverse the membrane as a helical segment. The Cytoplasmic portion of the chain corresponds to Arg-137–His-153. The chain crosses the membrane as a helical span at residues Ala-154 to Ile-174. Residues Tyr-175 to Tyr-210 lie on the Extracellular side of the membrane. Residue Asn-185 is glycosylated (N-linked (GlcNAc...) asparagine). Residues Thr-211–Phe-231 traverse the membrane as a helical segment. At Lys-232–Arg-259 the chain is on the cytoplasmic side. Residues Ile-260 to Ile-280 traverse the membrane as a helical segment. Residues Phe-281 to Asn-298 are Extracellular-facing. A helical membrane pass occupies residues Leu-299–Tyr-319. At Gly-320–Ile-382 the chain is on the cytoplasmic side. The S-palmitoyl cysteine moiety is linked to residue Cys-337. Phosphoserine is present on Ser-367.

This sequence belongs to the G-protein coupled receptor 1 family.

The protein resides in the cell membrane. Receptor for neuropeptide Y and peptide YY. This Canis lupus familiaris (Dog) protein is Neuropeptide Y receptor type 1 (NPY1R).